The sequence spans 419 residues: Dual specificity protein phosphatase 7 (419 aa).

The segment at 1–41 (MKNQLRGPPVRAHMSTSGAAAAGGTRAGSEPGAGSGSSAGI) is disordered. Low complexity predominate over residues 15-30 (STSGAAAAGGTRAGSE). Residues 31 to 41 (PGAGSGSSAGI) are compositionally biased toward gly residues. Positions 68-187 (GGASLLLLDC…FQTEYSEHCE (120 aa)) constitute a Rhodanese domain. Residues 216-240 (CSDGESDRELPSSATESDGSPVPSS) are disordered. The span at 227-240 (SSATESDGSPVPSS) shows a compositional bias: polar residues. A Tyrosine-protein phosphatase domain is found at 244–387 (FPVQILPYLY…LLDFERTLGL (144 aa)). Cys331 serves as the catalytic Phosphocysteine intermediate. 331 to 337 (CLAGISR) provides a ligand contact to substrate.

This sequence belongs to the protein-tyrosine phosphatase family. Non-receptor class dual specificity subfamily. As to quaternary structure, interacts with MAPK1/ERK2; the interaction enhances DUSP7 phosphatase activity.

Its subcellular location is the cytoplasm. It carries out the reaction O-phospho-L-tyrosyl-[protein] + H2O = L-tyrosyl-[protein] + phosphate. The catalysed reaction is O-phospho-L-seryl-[protein] + H2O = L-seryl-[protein] + phosphate. It catalyses the reaction O-phospho-L-threonyl-[protein] + H2O = L-threonyl-[protein] + phosphate. Its activity is regulated as follows. Strongly inhibited by sodium orthovanadate. In terms of biological role, dual specificity protein phosphatase. Shows high activity towards MAPK1/ERK2. Also has lower activity towards MAPK14 and MAPK8. In arrested oocytes, plays a role in meiotic resumption. Promotes nuclear envelope breakdown and activation of the CDK1/Cyclin-B complex in oocytes, probably by dephosphorylating and inactivating the conventional protein kinase C (cPKC) isozyme PRKCB. May also inactivate PRKCA and/or PRKCG. Also important in oocytes for normal chromosome alignment on the metaphase plate and progression to anaphase, where it might regulate activity of the spindle-assembly checkpoint (SAC) complex. In Rattus norvegicus (Rat), this protein is Dual specificity protein phosphatase 7.